Here is a 247-residue protein sequence, read N- to C-terminus: Probable transcriptional regulatory protein PMT_1423 (247 aa).

The protein belongs to the TACO1 family.

It localises to the cytoplasm. This chain is Probable transcriptional regulatory protein PMT_1423, found in Prochlorococcus marinus (strain MIT 9313).